Consider the following 249-residue polypeptide: Putative TrmH family tRNA/rRNA methyltransferase (249 aa).

Residues G196, I216, and L225 each coordinate S-adenosyl-L-methionine.

It belongs to the class IV-like SAM-binding methyltransferase superfamily. RNA methyltransferase TrmH family.

The sequence is that of Putative TrmH family tRNA/rRNA methyltransferase from Staphylococcus saprophyticus subsp. saprophyticus (strain ATCC 15305 / DSM 20229 / NCIMB 8711 / NCTC 7292 / S-41).